A 236-amino-acid chain; its full sequence is Potassium/proton antiporter CemA (236 aa).

Helical transmembrane passes span Thr12–Val32, Ile114–Gly134, Ile161–Ile181, and Phe196–Ile216.

The protein belongs to the CemA family.

The protein resides in the plastid. Its subcellular location is the chloroplast inner membrane. It carries out the reaction K(+)(in) + H(+)(out) = K(+)(out) + H(+)(in). In terms of biological role, contributes to K(+)/H(+) antiport activity by supporting proton efflux to control proton extrusion and homeostasis in chloroplasts in a light-dependent manner to modulate photosynthesis. Prevents excessive induction of non-photochemical quenching (NPQ) under continuous-light conditions. Indirectly promotes efficient inorganic carbon uptake into chloroplasts. This is Potassium/proton antiporter CemA from Chlorokybus atmophyticus (Soil alga).